Reading from the N-terminus, the 88-residue chain is UPF0473 protein CLL_A1177 (88 aa).

The protein belongs to the UPF0473 family.

The protein is UPF0473 protein CLL_A1177 of Clostridium botulinum (strain Eklund 17B / Type B).